A 209-amino-acid polypeptide reads, in one-letter code: Ribosomal RNA large subunit methyltransferase E (209 aa).

Residues glycine 63, tryptophan 65, aspartate 83, aspartate 99, and aspartate 124 each coordinate S-adenosyl-L-methionine. Residue lysine 164 is the Proton acceptor of the active site.

It belongs to the class I-like SAM-binding methyltransferase superfamily. RNA methyltransferase RlmE family.

Its subcellular location is the cytoplasm. It catalyses the reaction uridine(2552) in 23S rRNA + S-adenosyl-L-methionine = 2'-O-methyluridine(2552) in 23S rRNA + S-adenosyl-L-homocysteine + H(+). In terms of biological role, specifically methylates the uridine in position 2552 of 23S rRNA at the 2'-O position of the ribose in the fully assembled 50S ribosomal subunit. The protein is Ribosomal RNA large subunit methyltransferase E of Tolumonas auensis (strain DSM 9187 / NBRC 110442 / TA 4).